The sequence spans 188 residues: Ribosome maturation factor RimM (188 aa).

Residues 103 to 177 (EEGWYYADLI…RVVIDPPAGT (75 aa)) form the PRC barrel domain.

Belongs to the RimM family. In terms of assembly, binds ribosomal protein uS19.

It localises to the cytoplasm. In terms of biological role, an accessory protein needed during the final step in the assembly of 30S ribosomal subunit, possibly for assembly of the head region. Essential for efficient processing of 16S rRNA. May be needed both before and after RbfA during the maturation of 16S rRNA. It has affinity for free ribosomal 30S subunits but not for 70S ribosomes. The chain is Ribosome maturation factor RimM from Parvibaculum lavamentivorans (strain DS-1 / DSM 13023 / NCIMB 13966).